Here is a 313-residue protein sequence, read N- to C-terminus: 4-hydroxy-3-methylbut-2-enyl diphosphate reductase (313 aa).

Cys12 is a binding site for [4Fe-4S] cluster. (2E)-4-hydroxy-3-methylbut-2-enyl diphosphate is bound by residues His41 and His74. Positions 41 and 74 each coordinate dimethylallyl diphosphate. Isopentenyl diphosphate-binding residues include His41 and His74. A [4Fe-4S] cluster-binding site is contributed by Cys96. Position 124 (His124) interacts with (2E)-4-hydroxy-3-methylbut-2-enyl diphosphate. His124 lines the dimethylallyl diphosphate pocket. Position 124 (His124) interacts with isopentenyl diphosphate. Residue Glu126 is the Proton donor of the active site. Thr164 contributes to the (2E)-4-hydroxy-3-methylbut-2-enyl diphosphate binding site. Cys194 is a [4Fe-4S] cluster binding site. The (2E)-4-hydroxy-3-methylbut-2-enyl diphosphate site is built by Ser222, Ser223, Asn224, and Ser266. The dimethylallyl diphosphate site is built by Ser222, Ser223, Asn224, and Ser266. Residues Ser222, Ser223, Asn224, and Ser266 each coordinate isopentenyl diphosphate.

It belongs to the IspH family. [4Fe-4S] cluster is required as a cofactor.

The catalysed reaction is isopentenyl diphosphate + 2 oxidized [2Fe-2S]-[ferredoxin] + H2O = (2E)-4-hydroxy-3-methylbut-2-enyl diphosphate + 2 reduced [2Fe-2S]-[ferredoxin] + 2 H(+). It catalyses the reaction dimethylallyl diphosphate + 2 oxidized [2Fe-2S]-[ferredoxin] + H2O = (2E)-4-hydroxy-3-methylbut-2-enyl diphosphate + 2 reduced [2Fe-2S]-[ferredoxin] + 2 H(+). Its pathway is isoprenoid biosynthesis; dimethylallyl diphosphate biosynthesis; dimethylallyl diphosphate from (2E)-4-hydroxy-3-methylbutenyl diphosphate: step 1/1. It participates in isoprenoid biosynthesis; isopentenyl diphosphate biosynthesis via DXP pathway; isopentenyl diphosphate from 1-deoxy-D-xylulose 5-phosphate: step 6/6. In terms of biological role, catalyzes the conversion of 1-hydroxy-2-methyl-2-(E)-butenyl 4-diphosphate (HMBPP) into a mixture of isopentenyl diphosphate (IPP) and dimethylallyl diphosphate (DMAPP). Acts in the terminal step of the DOXP/MEP pathway for isoprenoid precursor biosynthesis. This Burkholderia pseudomallei (strain 1026b) protein is 4-hydroxy-3-methylbut-2-enyl diphosphate reductase.